The chain runs to 70 residues: Putative membrane protein insertion efficiency factor (70 aa).

Belongs to the UPF0161 family.

It localises to the cell inner membrane. Could be involved in insertion of integral membrane proteins into the membrane. This chain is Putative membrane protein insertion efficiency factor, found in Francisella tularensis subsp. tularensis (strain SCHU S4 / Schu 4).